A 368-amino-acid polypeptide reads, in one-letter code: Seipin-1 (368 aa).

The next 3 helical transmembrane spans lie at 26 to 46 (WFMVLVTIQADLIYNALVVLS), 101 to 121 (VMVLALILAVVIGVGIVSLYV), and 292 to 312 (LCVWTSMYLYVAILTALLWCF). The tract at residues 344–368 (MERRRRERRNQPRRRNFATTQKSYT) is disordered. The segment covering 346-359 (RRRRERRNQPRRRN) has biased composition (basic residues).

The protein belongs to the seipin family. Expressed in seeds and young seedlings. Not detected in leaves.

Its subcellular location is the endoplasmic reticulum membrane. Functionally, involved in lipid metabolism and lipid droplet (LD) morphology, number, and size. Facilitates the formation of large-sized LDs and modulates triacylglycerol accumulation. Induces probably a reorganization of the endoplasmic reticulum into LD-forming domains. The polypeptide is Seipin-1 (Arabidopsis thaliana (Mouse-ear cress)).